The chain runs to 234 residues: GTP-binding protein ypt4 (234 aa).

16–23 provides a ligand contact to GTP; it reads GPSGTGKS. Residues 39-47 carry the Effector region motif; that stretch reads SHTVGIDFA. 68–72 provides a ligand contact to GTP; that stretch reads DTAGQ. Residues Cys-233 and Cys-234 are each lipidated (S-geranylgeranyl cysteine).

The protein belongs to the small GTPase superfamily. Rab family.

It localises to the cell membrane. The sequence is that of GTP-binding protein ypt4 (ypt4) from Schizosaccharomyces pombe (strain 972 / ATCC 24843) (Fission yeast).